The chain runs to 310 residues: Homoserine kinase (310 aa).

An ATP-binding site is contributed by 91 to 101; the sequence is PIGSGLGSSAC.

Belongs to the GHMP kinase family. Homoserine kinase subfamily.

The protein resides in the cytoplasm. The catalysed reaction is L-homoserine + ATP = O-phospho-L-homoserine + ADP + H(+). The protein operates within amino-acid biosynthesis; L-threonine biosynthesis; L-threonine from L-aspartate: step 4/5. Functionally, catalyzes the ATP-dependent phosphorylation of L-homoserine to L-homoserine phosphate. This Escherichia coli (strain SE11) protein is Homoserine kinase.